The following is a 315-amino-acid chain: Small ribosomal subunit biogenesis GTPase RsgA (315 aa).

Residues 80-241 (LSKQTHIIAS…IIDTPGIKGF (162 aa)) form the CP-type G domain. Residues 129-132 (NKVD) and 183-191 (GHSGTGKST) contribute to the GTP site. 4 residues coordinate Zn(2+): Cys265, Cys270, His272, and Cys278.

This sequence belongs to the TRAFAC class YlqF/YawG GTPase family. RsgA subfamily. As to quaternary structure, monomer. Associates with 30S ribosomal subunit, binds 16S rRNA. Zn(2+) is required as a cofactor.

The protein resides in the cytoplasm. Functionally, one of several proteins that assist in the late maturation steps of the functional core of the 30S ribosomal subunit. Helps release RbfA from mature subunits. May play a role in the assembly of ribosomal proteins into the subunit. Circularly permuted GTPase that catalyzes slow GTP hydrolysis, GTPase activity is stimulated by the 30S ribosomal subunit. The protein is Small ribosomal subunit biogenesis GTPase RsgA of Christiangramia forsetii (strain DSM 17595 / CGMCC 1.15422 / KT0803) (Gramella forsetii).